The following is a 382-amino-acid chain: Anhydro-N-acetylmuramic acid kinase (382 aa).

22–29 (GTSMDGVD) lines the ATP pocket.

It belongs to the anhydro-N-acetylmuramic acid kinase family.

It carries out the reaction 1,6-anhydro-N-acetyl-beta-muramate + ATP + H2O = N-acetyl-D-muramate 6-phosphate + ADP + H(+). Its pathway is amino-sugar metabolism; 1,6-anhydro-N-acetylmuramate degradation. The protein operates within cell wall biogenesis; peptidoglycan recycling. Catalyzes the specific phosphorylation of 1,6-anhydro-N-acetylmuramic acid (anhMurNAc) with the simultaneous cleavage of the 1,6-anhydro ring, generating MurNAc-6-P. Is required for the utilization of anhMurNAc either imported from the medium or derived from its own cell wall murein, and thus plays a role in cell wall recycling. This Burkholderia lata (strain ATCC 17760 / DSM 23089 / LMG 22485 / NCIMB 9086 / R18194 / 383) protein is Anhydro-N-acetylmuramic acid kinase.